Reading from the N-terminus, the 289-residue chain is Glycine--tRNA ligase alpha subunit (289 aa).

It belongs to the class-II aminoacyl-tRNA synthetase family. Tetramer of two alpha and two beta subunits.

The protein resides in the cytoplasm. It carries out the reaction tRNA(Gly) + glycine + ATP = glycyl-tRNA(Gly) + AMP + diphosphate. In Rickettsia bellii (strain OSU 85-389), this protein is Glycine--tRNA ligase alpha subunit.